A 357-amino-acid polypeptide reads, in one-letter code: Ribosomal RNA large subunit methyltransferase M (357 aa).

Residues Ser-190, 223 to 226, Asp-242, Asp-262, and Asp-278 contribute to the S-adenosyl-L-methionine site; that span reads APGG. The active-site Proton acceptor is Lys-307.

Belongs to the class I-like SAM-binding methyltransferase superfamily. RNA methyltransferase RlmE family. RlmM subfamily. Monomer.

The protein localises to the cytoplasm. The enzyme catalyses cytidine(2498) in 23S rRNA + S-adenosyl-L-methionine = 2'-O-methylcytidine(2498) in 23S rRNA + S-adenosyl-L-homocysteine + H(+). Catalyzes the 2'-O-methylation at nucleotide C2498 in 23S rRNA. The polypeptide is Ribosomal RNA large subunit methyltransferase M (Chromohalobacter salexigens (strain ATCC BAA-138 / DSM 3043 / CIP 106854 / NCIMB 13768 / 1H11)).